The sequence spans 2450 residues: Tetratricopeptide repeat protein 28 (2450 aa).

Met-1 is subject to N-acetylmethionine. The disordered stretch occupies residues 1–36; that stretch reads MEQPPPLAPEPASARSRRRREPESPPAPIPLFGART. Phosphoserine is present on Ser-24. TPR repeat units follow at residues 52–85, 87–119, 120–153, 190–223, 228–261, 268–301, 308–341, 348–381, 388–421, 428–461, 468–501, 508–541, 548–581, 588–621, 628–661, 668–701, 708–741, 748–781, 788–821, 828–861, 871–904, 911–944, 951–984, 991–1024, 1031–1064, 1071–1104, 1111–1144, and 1163–1196; these read FVEK…DPQN, ILYS…NPKW, PKAY…DPKS, FVVV…GTCS, GSVF…AKTL, CRAH…AMKL, SSAL…AKQS, AREL…AKDL, ARAY…AQEL, MRAY…AEDL, GRAS…AQEL, GRAY…SMEV, ASTH…AREL, ARAL…APDL, GKVC…AKDL, AKAY…AQSL, FRAL…SHHV, ASAY…YQEL, CRAH…GRKL, AQVY…LQQL, GRAY…AQSL, AKAY…AHEL, AQAY…ARDM, SDAA…AEET, GRAY…AAQM, TVSY…AEQL, AKIR…FETI, and TSSY…AFAD. The disordered stretch occupies residues 1362–1381; the sequence is SGTVSPSKDGTSSLPRRQNS. Ser-1584 and Ser-2098 each carry phosphoserine. The disordered stretch occupies residues 2001 to 2364; sequence KPEGGLEGGG…GTLTSKRDVL (364 aa). Positions 2090–2116 are enriched in polar residues; it reads SVSSKGSVSTPNSPVKMTLIPSPNSPF. Residues 2124 to 2140 show a composition bias toward low complexity; sequence SSDTGESDQSSTETDST. Residues 2143–2153 are compositionally biased toward basic and acidic residues; that stretch reads SQEESTPKLDP. The segment covering 2191-2206 has biased composition (polar residues); the sequence is APSSTTVFRASETSAF. The residue at position 2216 (Ser-2216) is a Phosphoserine. Over residues 2229–2245 the composition is skewed to polar residues; that stretch reads ARSSSLPKVSSPATSEV. Composition is skewed to low complexity over residues 2252–2262 and 2296–2320; these read SPPGSSHPSPG and SPAC…SPAD. Phosphoserine occurs at positions 2365 and 2370.

In terms of assembly, interacts with AURKB. As to expression, expressed in embryos at all stages examined. In adult tissues, detected in heart and at low levels in kidney and testis.

Its subcellular location is the cytoplasm. The protein localises to the cytoskeleton. It is found in the microtubule organizing center. It localises to the centrosome. The protein resides in the spindle. Its subcellular location is the spindle pole. The protein localises to the midbody. Functionally, during mitosis, may be involved in the condensation of spindle midzone microtubules, leading to the formation of midbody. Essential for the formation and integrity of the midbody. Max play a critical role in the progress of mitosis and cytokinesis during cell cycle. The chain is Tetratricopeptide repeat protein 28 (Ttc28) from Mus musculus (Mouse).